The sequence spans 1084 residues: Putative tRNA-specific 2-thiouridylase (1084 aa).

3 consecutive transmembrane segments (helical) span residues 1–21, 32–52, and 309–329; these read MLIF…FILT, FIIS…FYVI, and IITI…YLIL. The active-site Nucleophile is C538. Cysteines 538 and 715 form a disulfide. Catalysis depends on C715, which acts as the Cysteine persulfide intermediate.

This sequence belongs to the MnmA/TRMU family.

It localises to the plastid. The protein localises to the apicoplast. It is found in the membrane. It catalyses the reaction S-sulfanyl-L-cysteinyl-[protein] + uridine(34) in tRNA + AH2 + ATP = 2-thiouridine(34) in tRNA + L-cysteinyl-[protein] + A + AMP + diphosphate + H(+). Its function is as follows. Catalyzes the 2-thiolation of uridine at the wobble position (U34) of tRNA, leading to the formation of s(2)U34. Required for apicoplast maintenance. In Plasmodium falciparum (isolate 3D7), this protein is Putative tRNA-specific 2-thiouridylase.